Consider the following 55-residue polypeptide: MAKGARDKIKLESTAGTGHFYTTTKNKRNMPEKMAIKKFDPVVRKRVEYKETKIK.

The protein belongs to the bacterial ribosomal protein bL33 family.

The sequence is that of Large ribosomal subunit protein bL33 from Burkholderia cenocepacia (strain ATCC BAA-245 / DSM 16553 / LMG 16656 / NCTC 13227 / J2315 / CF5610) (Burkholderia cepacia (strain J2315)).